Reading from the N-terminus, the 309-residue chain is Sulfate adenylyltransferase subunit 2 (309 aa).

This sequence belongs to the PAPS reductase family. CysD subfamily. In terms of assembly, heterodimer composed of CysD, the smaller subunit, and CysN.

The catalysed reaction is sulfate + ATP + H(+) = adenosine 5'-phosphosulfate + diphosphate. The protein operates within sulfur metabolism; hydrogen sulfide biosynthesis; sulfite from sulfate: step 1/3. In terms of biological role, with CysN forms the ATP sulfurylase (ATPS) that catalyzes the adenylation of sulfate producing adenosine 5'-phosphosulfate (APS) and diphosphate, the first enzymatic step in sulfur assimilation pathway. APS synthesis involves the formation of a high-energy phosphoric-sulfuric acid anhydride bond driven by GTP hydrolysis by CysN coupled to ATP hydrolysis by CysD. The sequence is that of Sulfate adenylyltransferase subunit 2 from Mycolicibacterium gilvum (strain PYR-GCK) (Mycobacterium gilvum (strain PYR-GCK)).